The primary structure comprises 139 residues: Large ribosomal subunit protein bL21 (139 aa).

This sequence belongs to the bacterial ribosomal protein bL21 family. Part of the 50S ribosomal subunit. Contacts protein L20.

This protein binds to 23S rRNA in the presence of protein L20. This is Large ribosomal subunit protein bL21 from Prochlorococcus marinus (strain NATL2A).